The following is a 719-amino-acid chain: Polyribonucleotide nucleotidyltransferase (719 aa).

Mg(2+)-binding residues include D491 and D497. The 60-residue stretch at 558 to 617 folds into the KH domain; that stretch reads PRMLTIKINPEKIRDVIGKGGATIRALTEETGTQIDISDDGTIVIASVDETQAKEAQRRI. The S1 motif domain occupies 627–695; the sequence is GQIYDGSVLR…DKGRLRLSIK (69 aa).

Belongs to the polyribonucleotide nucleotidyltransferase family. Mg(2+) serves as cofactor.

It is found in the cytoplasm. It catalyses the reaction RNA(n+1) + phosphate = RNA(n) + a ribonucleoside 5'-diphosphate. Its function is as follows. Involved in mRNA degradation. Catalyzes the phosphorolysis of single-stranded polyribonucleotides processively in the 3'- to 5'-direction. In Bordetella bronchiseptica (strain ATCC BAA-588 / NCTC 13252 / RB50) (Alcaligenes bronchisepticus), this protein is Polyribonucleotide nucleotidyltransferase.